The chain runs to 1025 residues: Dihydropyrimidine dehydrogenase [NADP(+)] (1025 aa).

In terms of domain architecture, 4Fe-4S ferredoxin-type 1 spans 69–100 (ERGALREAVRCLKCADAPCQKSCPTSLDIKSF). Cys79, Cys82, Cys87, and Cys91 together coordinate [4Fe-4S] cluster. FAD is bound at residue Val129. Residues Cys130, Cys136, Cys140, and Gln156 each contribute to the [4Fe-4S] cluster site. Residues 194–198 (GAGPA), 218–226 (EKQEYVGGL), and Arg235 contribute to the FAD site. NADP(+)-binding positions include 340–343 (AGDT), 364–365 (RK), and Arg371. An N6-acetyllysine modification is found at Lys384. Residues 437 to 439 (PFG) and 481 to 487 (DVVGMAN) each bind NADP(+). Position 480–489 (480–489 (GDVVGMANTT)) interacts with FAD. Residues Ser550 and 574–575 (KT) each bind FMN. Residues Asn609 and 668 to 670 (NLS) contribute to the substrate site. Residue Cys671 is the Proton acceptor of the active site. Lys709 contributes to the FMN binding site. 736–737 (NT) contacts substrate. FMN contacts are provided by residues Gly767, 793 to 795 (TGG), and 816 to 817 (CS). Ser905 carries the post-translational modification Phosphoserine. 2 consecutive 4Fe-4S ferredoxin-type domains span residues 944–976 (VVAL…FDPE) and 978–1007 (HLPT…MVSR). Positions 953, 956, 959, 963, 986, 989, 992, and 996 each coordinate [4Fe-4S] cluster.

It belongs to the dihydropyrimidine dehydrogenase family. Homodimer. It depends on FAD as a cofactor. Requires FMN as cofactor. [4Fe-4S] cluster serves as cofactor.

The protein localises to the cytoplasm. It carries out the reaction 5,6-dihydrouracil + NADP(+) = uracil + NADPH + H(+). The enzyme catalyses 5,6-dihydrothymine + NADP(+) = thymine + NADPH + H(+). It participates in amino-acid biosynthesis; beta-alanine biosynthesis. Inactivated by 5-iodouracil. In terms of biological role, involved in pyrimidine base degradation. Catalyzes the reduction of uracil and thymine. Also involved the degradation of the chemotherapeutic drug 5-fluorouracil. This Rattus norvegicus (Rat) protein is Dihydropyrimidine dehydrogenase [NADP(+)].